The following is a 593-amino-acid chain: Potassium channel KAT6 (593 aa).

Residues 1–33 lie on the Cytoplasmic side of the membrane; the sequence is MAASRSELLRPAFGEPSPSLGPFVVNPHTCSYR. Residues 34 to 54 traverse the membrane as a helical segment; the sequence is WWQKFLIVLVLYTAWASPFEL. At 55–64 the chain is on the extracellular side; the sequence is AMEKSASAAL. A helical transmembrane segment spans residues 65 to 85; it reads AVTELVVDAFFAVDIAVSFFV. Over 86-106 the chain is Cytoplasmic; the sequence is AYRDASTGLLVTDRKKIATRH. A helical transmembrane segment spans residues 107-129; it reads LARPCLALDVASTIPLQMIYRIV. Residues 130–138 are Extracellular-facing; the sequence is SGKRQALYG. A helical; Voltage-sensor membrane pass occupies residues 139-159; sequence LLNLLRLWRLRRVSKLFARLE. Residues 160 to 173 lie on the Cytoplasmic side of the membrane; that stretch reads KDIRFSYLWTRLIK. Residues 174–194 form a helical membrane-spanning segment; the sequence is LLYVTLFAVHFASCIYLWMAF. At 195-221 the chain is on the extracellular side; it reads HHKAKELTWIGSQFHGFEDRSVWFCYT. Positions 222-241 form an intramembrane region, pore-forming; the sequence is CAVYWSITTLATVGYGDLHA. The Extracellular portion of the chain corresponds to 242–247; that stretch reads ANTGEM. A helical transmembrane segment spans residues 248–268; it reads LFSIAFMLFNMGLTSYIIGNI. Residues 269-593 are Cytoplasmic-facing; that stretch reads TNLVVHETTN…RDGDHLFFSW (325 aa). 350 to 470 contributes to the a nucleoside 3',5'-cyclic phosphate binding site; it reads LFQGVSDKLV…VVVFSNFVLY (121 aa). The KHA domain occupies 522-593; the sequence is RVSIHEHLLN…RDGDHLFFSW (72 aa).

The protein belongs to the potassium channel family. Plant (TC 1.A.1.4) subfamily.

It is found in the membrane. Its function is as follows. Probable inward-rectifying potassium channel. Assuming opened or closed conformations in response to the voltage difference across the membrane, the channel is activated by hyperpolarization. The chain is Potassium channel KAT6 from Oryza sativa subsp. japonica (Rice).